The following is a 415-amino-acid chain: MEADLLIYNIKKIYTPLGNCPQCGSDMENIEEIEDAYIAIKDGKILAAGKSPAAISAKEKIDAKGMIAIPGFVDPHTHLIHYGSRENEVALKLKGYCYVDILKQGGGILSTVNATRNASDDQLIEKAMKSLDIMLSHGTTTVEVKSGYGLSTEEEIRLLRLMNKLNSISLVDIVPTFLGAHSIPTEFKENSWGYVDKIINEMIPKVKEENLAEFCDVFCEDGAFDYEQSKKILEEAKKYGMKLKIHADELTQSGGGELAGILGAVSADHLEEVSEKGIELMKKAGTVGVLLPGVSYFLDRPYANARKLIEKGLAVALGTDYNPGTSPTENLQLIMSFAYIKMKMSAKEILTAVTLNAACAIDRGNEIGTIEKGKKADILLIDVPNLDYVMYHFGINHVNTVIKSKGDKAVVIGVR.

The Fe(3+) site is built by His76 and His78. Zn(2+) is bound by residues His76 and His78. 3 residues coordinate 4-imidazolone-5-propanoate: Arg85, Tyr148, and His181. Tyr148 provides a ligand contact to N-formimidoyl-L-glutamate. His246 provides a ligand contact to Fe(3+). Zn(2+) is bound at residue His246. 4-imidazolone-5-propanoate is bound at residue Glu249. Asp320 is a Fe(3+) binding site. Zn(2+) is bound at residue Asp320. The N-formimidoyl-L-glutamate site is built by Asn322 and Gly324. Residue Thr325 coordinates 4-imidazolone-5-propanoate.

This sequence belongs to the metallo-dependent hydrolases superfamily. HutI family. The cofactor is Zn(2+). Fe(3+) serves as cofactor.

Its subcellular location is the cytoplasm. It catalyses the reaction 4-imidazolone-5-propanoate + H2O = N-formimidoyl-L-glutamate. The protein operates within amino-acid degradation; L-histidine degradation into L-glutamate; N-formimidoyl-L-glutamate from L-histidine: step 3/3. Its function is as follows. Catalyzes the hydrolytic cleavage of the carbon-nitrogen bond in imidazolone-5-propanoate to yield N-formimidoyl-L-glutamate. It is the third step in the universal histidine degradation pathway. The chain is Imidazolonepropionase from Thermoanaerobacter pseudethanolicus (strain ATCC 33223 / 39E) (Clostridium thermohydrosulfuricum).